Reading from the N-terminus, the 254-residue chain is Imidazole glycerol phosphate synthase subunit HisF (254 aa).

Active-site residues include aspartate 11 and aspartate 130.

This sequence belongs to the HisA/HisF family. In terms of assembly, heterodimer of HisH and HisF.

The protein resides in the cytoplasm. The enzyme catalyses 5-[(5-phospho-1-deoxy-D-ribulos-1-ylimino)methylamino]-1-(5-phospho-beta-D-ribosyl)imidazole-4-carboxamide + L-glutamine = D-erythro-1-(imidazol-4-yl)glycerol 3-phosphate + 5-amino-1-(5-phospho-beta-D-ribosyl)imidazole-4-carboxamide + L-glutamate + H(+). It participates in amino-acid biosynthesis; L-histidine biosynthesis; L-histidine from 5-phospho-alpha-D-ribose 1-diphosphate: step 5/9. Its function is as follows. IGPS catalyzes the conversion of PRFAR and glutamine to IGP, AICAR and glutamate. The HisF subunit catalyzes the cyclization activity that produces IGP and AICAR from PRFAR using the ammonia provided by the HisH subunit. In Laribacter hongkongensis (strain HLHK9), this protein is Imidazole glycerol phosphate synthase subunit HisF.